We begin with the raw amino-acid sequence, 426 residues long: Tyrosine--tRNA ligase (426 aa).

Residue Tyr-37 participates in L-tyrosine binding. Residues 42-51 (PTADSLHLGH) carry the 'HIGH' region motif. Tyr-175 and Gln-179 together coordinate L-tyrosine. The 'KMSKS' region motif lies at 235 to 239 (KFGKT). Lys-238 serves as a coordination point for ATP. The S4 RNA-binding domain maps to 357-415 (TDLMQALVESELQPSRGQARKAIAANGVTVNGIKQPDPDYVLNENDRYFSNYTLLRRGK).

The protein belongs to the class-I aminoacyl-tRNA synthetase family. TyrS type 1 subfamily. As to quaternary structure, homodimer.

The protein localises to the cytoplasm. The enzyme catalyses tRNA(Tyr) + L-tyrosine + ATP = L-tyrosyl-tRNA(Tyr) + AMP + diphosphate + H(+). Catalyzes the attachment of tyrosine to tRNA(Tyr) in a two-step reaction: tyrosine is first activated by ATP to form Tyr-AMP and then transferred to the acceptor end of tRNA(Tyr). The protein is Tyrosine--tRNA ligase of Klebsiella pneumoniae (strain 342).